A 189-amino-acid chain; its full sequence is Ornithine decarboxylase antizyme 2 (189 aa).

Residue Ser186 is modified to Phosphoserine.

This sequence belongs to the ODC antizyme family. In terms of assembly, interacts with ODC1 and thereby sterically blocks ODC homodimerization. Interacts with AZIN2; this interaction disrupts the interaction between the antizyme and ODC1.

It is found in the nucleus. Functionally, ornithine decarboxylase (ODC) antizyme protein that negatively regulates ODC activity and intracellular polyamine biosynthesis and uptake in response to increased intracellular polyamine levels. Binds to ODC monomers, inhibiting the assembly of the functional ODC homodimers. Does not target the ODC monomers for degradation, which allows a protein synthesis-independent restoration of ODC activity. Involved in the translocation of AZIN2 from ER-Golgi intermediate compartment (ERGIC) to the cytosol. In Mus musculus (Mouse), this protein is Ornithine decarboxylase antizyme 2 (Oaz2).